The sequence spans 223 residues: Phosphoribosylformylglycinamidine synthase subunit PurQ (223 aa).

In terms of domain architecture, Glutamine amidotransferase type-1 spans 2-223 (KFAVIQFPGS…ASVLKNFVGK (222 aa)). The active-site Nucleophile is the Cys86. Catalysis depends on residues His195 and Glu197.

As to quaternary structure, part of the FGAM synthase complex composed of 1 PurL, 1 PurQ and 2 PurS subunits.

It is found in the cytoplasm. The enzyme catalyses N(2)-formyl-N(1)-(5-phospho-beta-D-ribosyl)glycinamide + L-glutamine + ATP + H2O = 2-formamido-N(1)-(5-O-phospho-beta-D-ribosyl)acetamidine + L-glutamate + ADP + phosphate + H(+). It catalyses the reaction L-glutamine + H2O = L-glutamate + NH4(+). It functions in the pathway purine metabolism; IMP biosynthesis via de novo pathway; 5-amino-1-(5-phospho-D-ribosyl)imidazole from N(2)-formyl-N(1)-(5-phospho-D-ribosyl)glycinamide: step 1/2. Its function is as follows. Part of the phosphoribosylformylglycinamidine synthase complex involved in the purines biosynthetic pathway. Catalyzes the ATP-dependent conversion of formylglycinamide ribonucleotide (FGAR) and glutamine to yield formylglycinamidine ribonucleotide (FGAM) and glutamate. The FGAM synthase complex is composed of three subunits. PurQ produces an ammonia molecule by converting glutamine to glutamate. PurL transfers the ammonia molecule to FGAR to form FGAM in an ATP-dependent manner. PurS interacts with PurQ and PurL and is thought to assist in the transfer of the ammonia molecule from PurQ to PurL. This is Phosphoribosylformylglycinamidine synthase subunit PurQ from Lactococcus lactis subsp. lactis (strain IL1403) (Streptococcus lactis).